The primary structure comprises 122 residues: Large ribosomal subunit protein uL14 (122 aa).

It belongs to the universal ribosomal protein uL14 family. As to quaternary structure, part of the 50S ribosomal subunit. Forms a cluster with proteins L3 and L19. In the 70S ribosome, L14 and L19 interact and together make contacts with the 16S rRNA in bridges B5 and B8.

Its function is as follows. Binds to 23S rRNA. Forms part of two intersubunit bridges in the 70S ribosome. In Streptomyces avermitilis (strain ATCC 31267 / DSM 46492 / JCM 5070 / NBRC 14893 / NCIMB 12804 / NRRL 8165 / MA-4680), this protein is Large ribosomal subunit protein uL14.